The primary structure comprises 729 residues: E3 ubiquitin-protein ligase SH3RF2 (729 aa).

Residues 12–53 form an RING-type zinc finger; that stretch reads CPVCFEKLDVTAKVLPCQHTFCKPCLQRVFKAHKELRCPECR. Residues 78-105 form a disordered region; that stretch reads SGQSSGRGGSFRRPGTMTLQDGRKSRTN. 2 SH3 domains span residues 125 to 184 and 187 to 252; these read DGVP…VIKQ and QPPP…PNLT. Residues 258–297 form a disordered region; the sequence is EKNKGRQSSRTKNLSLVSSSSRGNTSTLRRGPGSRRKVPG. Residues 263–285 are compositionally biased toward polar residues; that stretch reads RQSSRTKNLSLVSSSSRGNTSTL. The tract at residues 370–459 is interaction with PAK4; the sequence is VVSLPGSQQH…RSPGLYTTWT (90 aa). In terms of domain architecture, SH3 3 spans 380-441; the sequence is LSANMFVALH…PNNYVIPIFR (62 aa). Disordered stretches follow at residues 497-526 and 610-677; these read STAG…QRPL and KSEP…SQPE. Polar residues predominate over residues 517–526; that stretch reads RKNGSLQRPL. The tract at residues 641 to 646 is interaction with PPP1CA; the sequence is KTVRFQ. Serine 649 carries the phosphoserine modification.

It belongs to the SH3RF family. Interacts with FASLG and PPP1CA. Interacts with PAK4 and TNFRSF1A. Interacts with DLK1, MAP3K10/MLK2, MAPK8IP1/JIP1, MAPK8IP2/JIP2 and MAPK8IP3/JIP3. Interacts with RAC1 (both active GTP- or inactive GDP-bound forms). Autoubiquitinated. As to expression, heart (at protein level). Up-regulated in colon cancer tissues as compared to normal colon tissues (at protein level). Testis. In the heart, present in the apex, left atrium, right atrium, left ventricle and right ventricle, but not in the aorta.

The protein localises to the nucleus. It carries out the reaction S-ubiquitinyl-[E2 ubiquitin-conjugating enzyme]-L-cysteine + [acceptor protein]-L-lysine = [E2 ubiquitin-conjugating enzyme]-L-cysteine + N(6)-ubiquitinyl-[acceptor protein]-L-lysine.. It participates in protein modification; protein ubiquitination. Has E3 ubiquitin-protein ligase activity. Acts as an anti-apoptotic regulator of the JNK pathway by ubiquitinating and promoting the degradation of SH3RF1, a scaffold protein that is required for pro-apoptotic JNK activation. Facilitates TNF-alpha-mediated recruitment of adapter proteins TRADD and RIPK1 to TNFRSF1A and regulates PAK4 protein stability via inhibition of its ubiquitin-mediated proteasomal degradation. Inhibits PPP1CA phosphatase activity. The sequence is that of E3 ubiquitin-protein ligase SH3RF2 (SH3RF2) from Homo sapiens (Human).